The chain runs to 55 residues: Caltrin-like protein 2 (55 aa).

One can recognise a WAP domain in the interval alanine 7–glutamate 55.

Post-translationally, glycosylated.

Its function is as follows. Inhibits calcium transport into spermatozoa. The polypeptide is Caltrin-like protein 2 (Cavia porcellus (Guinea pig)).